The sequence spans 1765 residues: RANBP2-like and GRIP domain-containing protein 8 (1765 aa).

A Phosphothreonine modification is found at Thr-19. A Phosphoserine modification is found at Ser-21. TPR repeat units lie at residues 26-59 (SMKGFYFAKLYYEAKEYDLAKKYICTYINVQERD), 60-93 (PKAHRFLGLLYELEENTEKAVECYRRSVELNPTQ), and 648-681 (EDAHITFAILDAVNGNIEDAVTAFESIKSVVSYW). Residues 760 to 804 (GPLYKNGSLRNADSEIKHSTPSPTKYSLSPSKSYKYSPETPPRWT) form a disordered region. Positions 778 to 797 (STPSPTKYSLSPSKSYKYSP) are enriched in low complexity. Residues 1036-1172 (HFEPVVQMPE…FEECQRLLLD (137 aa)) form the RanBD1 1 domain. Disordered regions lie at residues 1216–1247 (TEEENKGSGTGVAGASDTTIKPNAENTGPTLE) and 1306–1330 (AKLNQSGTSVGTDEESVVTQEEERD). The span at 1231 to 1244 (SDTTIKPNAENTGP) shows a compositional bias: polar residues. Residues 1317–1329 (TDEESVVTQEEER) are compositionally biased toward acidic residues. A RanBD1 2 domain is found at 1333–1469 (YFEPVVPLPD…FDEAKTAQEK (137 aa)). Polar residues predominate over residues 1580 to 1593 (NNSETSSVAQSGSE). Disordered regions lie at residues 1580 to 1621 (NNSE…KNLS) and 1746 to 1765 (KGKLAAVAQDEEENPSRSSG). The span at 1594 to 1617 (SKVEPKKCELSKNSDIEQSSDSKV) shows a compositional bias: basic and acidic residues. The 51-residue stretch at 1702–1752 (REKSAANLEYLKNVLLQFIFLKPGSERERLLPVINTMLQLSPEEKGKLAAV) folds into the GRIP domain.

Interacts with GTP-bound ARL1.

In Homo sapiens (Human), this protein is RANBP2-like and GRIP domain-containing protein 8 (RGPD8).